Here is a 125-residue protein sequence, read N- to C-terminus: Small ribosomal subunit protein mS41 (125 aa).

Residues 1 to 23 constitute a mitochondrion transit peptide; it reads MLFRRLFSSSVIVQAASKTSLRK.

It belongs to the mitochondrion-specific ribosomal protein mS41 family.

Its subcellular location is the mitochondrion. In terms of biological role, involved in telomere length regulation. In Kluyveromyces lactis (strain ATCC 8585 / CBS 2359 / DSM 70799 / NBRC 1267 / NRRL Y-1140 / WM37) (Yeast), this protein is Small ribosomal subunit protein mS41 (FYV4).